Reading from the N-terminus, the 770-residue chain is Protein PAT1 homolog 1 (770 aa).

Residues 1–26 are disordered; that stretch reads MFRYESLEDCPLDEDEDAFQGLGEED. A region A; interaction with DDX6/RCK region spans residues 1–84; sequence MFRYESLEDC…EMDLLGDHEE (84 aa). Residues 1-397 are involved in nuclear foci localization; sequence MFRYESLEDC…HRSSHQDHLR (397 aa). Over residues 7 to 26 the composition is skewed to acidic residues; sequence LEDCPLDEDEDAFQGLGEED. Residues 85–388 are region N; interaction with decapping machinery; the sequence is NLAERLSKMV…LNGAGDRGSH (304 aa). A Nuclear export signal motif is present at residues 86–95; that stretch reads LAERLSKMVI. Ser-177 is subject to Phosphoserine. The residue at position 178 (Thr-178) is a Phosphothreonine. Phosphoserine occurs at positions 179 and 184. Thr-194 bears the Phosphothreonine mark. Arg-217, Arg-223, and Arg-263 each carry asymmetric dimethylarginine. An involved in RNA-binding region spans residues 223–397; that stretch reads RYPAPYGERM…HRSSHQDHLR (175 aa). Residue Ser-278 is modified to Phosphoserine. At Arg-284 the chain carries Asymmetric dimethylarginine. Disordered stretches follow at residues 315-344 and 360-400; these read FRAF…QNLR and QHRR…RKDP. The segment covering 324–337 has biased composition (pro residues); the sequence is SATPPPQQHPPGPG. Over residues 367–380 the composition is skewed to low complexity; the sequence is QRQQQNRNQHRNLN. At Arg-385 the chain carries Omega-N-methylarginine. Residues 385–400 show a composition bias toward basic and acidic residues; sequence RGSHRSSHQDHLRKDP. The tract at residues 389–448 is region H; it reads RSSHQDHLRKDPYANLMLQREKDWVSKIQMMQLQSTDPYLDDFYYQNYFEKLEKLSAAEE. The tract at residues 398 to 770 is involved in nuclear speckle localization; that stretch reads KDPYANLMLQ…TKLQLVQGIR (373 aa). A region C region spans residues 449–770; it reads IQGDGPKKER…TKLQLVQGIR (322 aa).

Belongs to the PAT1 family. Interacts (via region A) with DDX6/RCK. Interacts (via region H and region C) with LSM1 and LSM4. Interacts (via region N) with DCP1A, DCP2, EDC3, EDC4 and XRN1. Interacts with the CCR4-NOT complex. Interacts with the Lsm-containing SMN-Sm protein complex. Interacts with EIF4ENIF1/4E-T.

Its subcellular location is the cytoplasm. It is found in the P-body. The protein localises to the nucleus. The protein resides in the PML body. It localises to the nucleus speckle. In terms of biological role, RNA-binding protein involved in deadenylation-dependent decapping of mRNAs, leading to the degradation of mRNAs. Acts as a scaffold protein that connects deadenylation and decapping machinery. Required for cytoplasmic mRNA processing body (P-body) assembly. This is Protein PAT1 homolog 1 (PATL1) from Pongo abelii (Sumatran orangutan).